A 212-amino-acid chain; its full sequence is uncharacterized protein (212 aa).

A helical membrane pass occupies residues 11–31 (NLIFFQFIVYFFFISLTILII).

It localises to the membrane. This is an uncharacterized protein from Rickettsia prowazekii (strain Madrid E).